The primary structure comprises 529 residues: Cytochrome P450 monooxygenase patI (529 aa).

Over 1–8 (MDFTQVPP) the chain is Cytoplasmic. The helical transmembrane segment at 9 to 25 (SYILGVLLSSTSILFCL) threads the bilayer. Residues 26 to 529 (KYLLRSGYRP…EAQGVFSRFD (504 aa)) lie on the Lumenal side of the membrane. N-linked (GlcNAc...) asparagine glycans are attached at residues N81 and N383. C449 is a heme binding site.

It belongs to the cytochrome P450 family. Requires heme as cofactor.

Its subcellular location is the endoplasmic reticulum membrane. The catalysed reaction is 3-hydroxybenzyl alcohol + reduced [NADPH--hemoprotein reductase] + O2 = gentisyl alcohol + oxidized [NADPH--hemoprotein reductase] + H2O + H(+). The protein operates within mycotoxin biosynthesis; patulin biosynthesis. In terms of biological role, cytochrome P450 monooxygenase; part of the gene cluster that mediates the biosynthesis of patulin, an acetate-derived tetraketide mycotoxin produced by several fungal species that shows antimicrobial properties against several bacteria. PatI catalyzes the conversion of m-hydroxybenzyl alcohol into gentisyl alcohol. The pathway begins with the synthesis of 6-methylsalicylic acid by the polyketide synthase (PKS) patK via condensation of acetate and malonate units. The 6-methylsalicylic acid decarboxylase patG then catalyzes the decarboxylation of 6-methylsalicylic acid to yield m-cresol (also known as 3-methylphenol). These first reactions occur in the cytosol. The intermediate m-cresol is then transported into the endoplasmic reticulum where the cytochrome P450 monooxygenase patH converts it to m-hydroxybenzyl alcohol, which is further converted to gentisyl alcohol by the cytochrome P450 monooxygenase patI. The oxidoreductases patJ and patO further convert gentisyl alcohol to isoepoxydon in the vacuole. PatN catalyzes then the transformation of isoepoxydon into phyllostine. The cluster protein patF is responsible for the conversion from phyllostine to neopatulin whereas the alcohol dehydrogenase patD converts neopatulin to E-ascladiol. The steps between isoepoxydon and E-ascladiol occur in the cytosol, and E-ascladiol is probably secreted to the extracellular space by one of the cluster-specific transporters patC or patM. Finally, the secreted patulin synthase patE catalyzes the conversion of E-ascladiol to patulin. The sequence is that of Cytochrome P450 monooxygenase patI from Aspergillus clavatus (strain ATCC 1007 / CBS 513.65 / DSM 816 / NCTC 3887 / NRRL 1 / QM 1276 / 107).